Here is a 413-residue protein sequence, read N- to C-terminus: S-adenosylmethionine synthase (413 aa).

An ATP-binding site is contributed by His-15. A Mg(2+)-binding site is contributed by Asp-17. Position 43 (Glu-43) interacts with K(+). Glu-56 and Gln-100 together coordinate L-methionine. Positions 100–110 (QSPDISQGVNE) are flexible loop. ATP is bound by residues 171-173 (DGK), 248-249 (KF), Asp-257, 263-264 (RK), Ala-280, and Lys-284. Position 257 (Asp-257) interacts with L-methionine. Lys-288 is a binding site for L-methionine.

This sequence belongs to the AdoMet synthase family. In terms of assembly, homotetramer; dimer of dimers. Mg(2+) is required as a cofactor. It depends on K(+) as a cofactor.

The protein resides in the cytoplasm. The catalysed reaction is L-methionine + ATP + H2O = S-adenosyl-L-methionine + phosphate + diphosphate. The protein operates within amino-acid biosynthesis; S-adenosyl-L-methionine biosynthesis; S-adenosyl-L-methionine from L-methionine: step 1/1. Its function is as follows. Catalyzes the formation of S-adenosylmethionine (AdoMet) from methionine and ATP. The overall synthetic reaction is composed of two sequential steps, AdoMet formation and the subsequent tripolyphosphate hydrolysis which occurs prior to release of AdoMet from the enzyme. In Prochlorococcus marinus (strain AS9601), this protein is S-adenosylmethionine synthase.